The sequence spans 236 residues: 2-C-methyl-D-erythritol 4-phosphate cytidylyltransferase (236 aa).

The protein belongs to the IspD/TarI cytidylyltransferase family. IspD subfamily.

It catalyses the reaction 2-C-methyl-D-erythritol 4-phosphate + CTP + H(+) = 4-CDP-2-C-methyl-D-erythritol + diphosphate. It participates in isoprenoid biosynthesis; isopentenyl diphosphate biosynthesis via DXP pathway; isopentenyl diphosphate from 1-deoxy-D-xylulose 5-phosphate: step 2/6. Its function is as follows. Catalyzes the formation of 4-diphosphocytidyl-2-C-methyl-D-erythritol from CTP and 2-C-methyl-D-erythritol 4-phosphate (MEP). This Symbiobacterium thermophilum (strain DSM 24528 / JCM 14929 / IAM 14863 / T) protein is 2-C-methyl-D-erythritol 4-phosphate cytidylyltransferase.